Here is a 272-residue protein sequence, read N- to C-terminus: Tail assembly protein Gp25 (272 aa).

A disordered region spans residues Asn-219–Glu-272. 2 stretches are compositionally biased toward basic and acidic residues: residues Pro-234–Thr-243 and Glu-262–Glu-272.

The protein belongs to the L5likevirus tail assembly protein family. As to quaternary structure, interacts with tail assembly protein Gp24 and tape measure protein.

Functionally, promotes tail assembly by creating a scaffold for the tail tube proteins. The tail assembly proteins Gp24 and Gp25 would wrap the linear tape measure protein to create a tail assembly scaffold. It would allow polymerization of tail tube protein during which Gp24 and Gp25 are released and therefore are absent from the mature virion. The tail assembly protein Gp25 is produced by a rare -1 ribosomal frameshift. The ratio Gp24/Gp25 is important for proper tail assembly. This is Tail assembly protein Gp25 (25) from Mycobacterium phage L5 (Mycobacteriophage L5).